The following is a 500-amino-acid chain: L-arabinose isomerase (500 aa).

Residues glutamate 306, glutamate 333, histidine 350, and histidine 450 each contribute to the Mn(2+) site.

Belongs to the arabinose isomerase family. As to quaternary structure, homohexamer. It depends on Mn(2+) as a cofactor.

It carries out the reaction beta-L-arabinopyranose = L-ribulose. The protein operates within carbohydrate degradation; L-arabinose degradation via L-ribulose; D-xylulose 5-phosphate from L-arabinose (bacterial route): step 1/3. Catalyzes the conversion of L-arabinose to L-ribulose. This Shigella flexneri protein is L-arabinose isomerase.